Here is a 92-residue protein sequence, read N- to C-terminus: Small ribosomal subunit protein uS19 (92 aa).

This sequence belongs to the universal ribosomal protein uS19 family.

Its function is as follows. Protein S19 forms a complex with S13 that binds strongly to the 16S ribosomal RNA. The sequence is that of Small ribosomal subunit protein uS19 from Desulfatibacillum aliphaticivorans.